The chain runs to 393 residues: MSFQGEITHLSQKGLGVVQHPENGLSYFVAGTWPGDRGEFEITDRALNNRKYGYARLIRLIQSSRHRKTPECRFLGFSGNDCSGCPWMIADYDSQLEQKKNRFLYAMHRVGFDLADLNIGAVQPSPDLFGYRNRFQVKTDGEKLGFVAEGSHHIVPIEDCLILNPACRQHLQTLRKHLPSREWSPAPGDDWNFIDLDDQSPAEPVLLNWKQPFRQGNDAQNQWMRSWLKYALEQHGHSHKIVELFCGSGNFTEVIAQTGCPEILAYEADPQAITVLRQKNLPGVDARTADLYHPFIWKILKKNVQDAGILVLDPPRSGLKTLRGFFDAFAALETICYISCDPVTFARDAWIFCKNGWKFTDIQLIDLFPHTPHIEITATFHKQWGNTKKGNKR.

[4Fe-4S] cluster-binding residues include C72, C82, C85, and C160. Q215, F245, E267, and D313 together coordinate S-adenosyl-L-methionine. The Nucleophile role is filled by C340.

The protein belongs to the class I-like SAM-binding methyltransferase superfamily. RNA M5U methyltransferase family.

This is an uncharacterized protein from Nitrosomonas europaea (strain ATCC 19718 / CIP 103999 / KCTC 2705 / NBRC 14298).